We begin with the raw amino-acid sequence, 202 residues long: Protein U22 (202 aa).

2 consecutive transmembrane segments (helical) span residues 5–25 (GWSLAWVSVLYVSVIPSLHII) and 172–192 (FVYYCISVYLFAVAVFCSCWF).

It is found in the host membrane. This is Protein U22 (U22) from Human herpesvirus 6B (strain Z29) (HHV-6 variant B).